We begin with the raw amino-acid sequence, 528 residues long: Cytochrome P450 1A5 (528 aa).

Cysteine 467 is a heme binding site.

Belongs to the cytochrome P450 family. The cofactor is heme.

Its subcellular location is the endoplasmic reticulum membrane. The protein resides in the microsome membrane. It catalyses the reaction an organic molecule + reduced [NADPH--hemoprotein reductase] + O2 = an alcohol + oxidized [NADPH--hemoprotein reductase] + H2O + H(+). Functionally, cytochromes P450 are a group of heme-thiolate monooxygenases. In liver microsomes, this enzyme is involved in an NADPH-dependent electron transport pathway. It oxidizes a variety of structurally unrelated compounds, including steroids, fatty acids, and xenobiotics. In Gallus gallus (Chicken), this protein is Cytochrome P450 1A5 (CYP1A5).